The following is a 131-amino-acid chain: Protein Turandot M (131 aa).

Residues 1–23 (MNPAIYLSCLVVFSLLLLGKVNA) form the signal peptide.

The protein belongs to the Turandot family.

It is found in the secreted. Functionally, a humoral factor that may play a role in stress tolerance. Requires Mekk1 expression in the fat body to regulate response to septic injury and consequent immune response. The protein is Protein Turandot M of Drosophila erecta (Fruit fly).